Consider the following 79-residue polypeptide: Sec-independent protein translocase protein TatA (79 aa).

A helical transmembrane segment spans residues 1–21; that stretch reads MGGFTSIWHWVIVLLVIVLLF. The interval 46 to 79 is disordered; that stretch reads DDEEEAKNEPKTLDAQATQTKVHETSEIKSKQES. Residues 66-79 are compositionally biased toward basic and acidic residues; it reads KVHETSEIKSKQES.

This sequence belongs to the TatA/E family. As to quaternary structure, the Tat system comprises two distinct complexes: a TatABC complex, containing multiple copies of TatA, TatB and TatC subunits, and a separate TatA complex, containing only TatA subunits. Substrates initially bind to the TatABC complex, which probably triggers association of the separate TatA complex to form the active translocon.

The protein localises to the cell inner membrane. Part of the twin-arginine translocation (Tat) system that transports large folded proteins containing a characteristic twin-arginine motif in their signal peptide across membranes. TatA could form the protein-conducting channel of the Tat system. The sequence is that of Sec-independent protein translocase protein TatA from Helicobacter pylori (strain HPAG1).